The following is a 241-amino-acid chain: tRNA (guanine-N(7)-)-methyltransferase (241 aa).

S-adenosyl-L-methionine-binding residues include Glu-71, Glu-96, Asp-123, and Asp-146. Residue Asp-146 is part of the active site. Residues Lys-150, Asp-182, and 219-222 (TKFE) contribute to the substrate site.

This sequence belongs to the class I-like SAM-binding methyltransferase superfamily. TrmB family.

The catalysed reaction is guanosine(46) in tRNA + S-adenosyl-L-methionine = N(7)-methylguanosine(46) in tRNA + S-adenosyl-L-homocysteine. It functions in the pathway tRNA modification; N(7)-methylguanine-tRNA biosynthesis. Its function is as follows. Catalyzes the formation of N(7)-methylguanine at position 46 (m7G46) in tRNA. This chain is tRNA (guanine-N(7)-)-methyltransferase, found in Pseudoalteromonas translucida (strain TAC 125).